A 442-amino-acid chain; its full sequence is MSAPSALVKQPPIQSTAGACPSRNEKGRAVYGEGEGETVCVGKAAADYVPMESSEEEDEEFQFIKKAKEQEVEPEEQEEEVANDPRLRRLLQNRITEDVEERLARHRKIVEPEVVSGESDSEVEGEAWRVEREDTSEEEEEEIDDEEIERWRGMMRQRAQERKTEELEVMELEDEGRSGEESELESEYEEYTDSEDEMEPRLKPVFIRKKDRITVQEREAEALKQKELEQEAKRLAEERRKYTLKIVEEEAKKELEENKRSLAALDALDTDDENDEEEYEAWKVRELKRIKRDREEREAMEKEKAEIERMRNLTEEERRAELRANGKVVTNKAVKGKYKFLQKYYHRGAFFMDEDEEVYKRDFSAPTLEDHFNKTILPKVMQVKNFGRSGRTKYTHLVDQDTTSFDSAWGQESAQNTKFFKQKAAGVRDVFERPSAKKRKTT.

2 disordered regions span residues Met1–Gly34 and Glu113–Lys203. 2 stretches are compositionally biased toward acidic residues: residues Asp134 to Ile148 and Glu181 to Met198.

It belongs to the MFAP1 family. In terms of assembly, component of the spliceosome B complex. Interacts with PRPF38A (via N-terminal interaction domain). As to expression, widely expressed.

Its subcellular location is the nucleus. Its function is as follows. Involved in pre-mRNA splicing as a component of the spliceosome. The polypeptide is Microfibrillar-associated protein 1 (Gallus gallus (Chicken)).